Reading from the N-terminus, the 411-residue chain is Small ribosomal subunit protein bS1c (411 aa).

The transit peptide at 1–41 (MASLAQQLAGGLRCPPLSNSNLSKPFSPKHTLKPRFSPIVS) directs the protein to the chloroplast. S1 motif domains follow at residues 96–166 (GSRV…LSLR), 184–248 (DVVV…MSNR), and 261–329 (GSVV…LSTK).

The protein belongs to the bacterial ribosomal protein bS1 family. As to quaternary structure, component of the chloroplast small ribosomal subunit (SSU). Mature 70S chloroplast ribosomes of higher plants consist of a small (30S) and a large (50S) subunit. The 30S small subunit contains 1 molecule of ribosomal RNA (16S rRNA) and 24 different proteins. The 50S large subunit contains 3 rRNA molecules (23S, 5S and 4.5S rRNA) and 33 different proteins.

The protein resides in the plastid. Its subcellular location is the chloroplast. In terms of biological role, component of the chloroplast ribosome (chloro-ribosome), a dedicated translation machinery responsible for the synthesis of chloroplast genome-encoded proteins, including proteins of the transcription and translation machinery and components of the photosynthetic apparatus. Actively engaged in the initiation complex formation via a strong mRNA-binding activity. Possesses a poly(A)-binding activity which might play a role as a control element in chloroplast mRNA translation. This chain is Small ribosomal subunit protein bS1c (RPS1), found in Spinacia oleracea (Spinach).